The chain runs to 390 residues: Terminal nucleotidyltransferase 5C (390 aa).

It belongs to the TENT family.

Its subcellular location is the nucleus. The protein resides in the cytoplasm. The protein localises to the cytoskeleton. It is found in the microtubule organizing center. It localises to the centrosome. The enzyme catalyses RNA(n) + ATP = RNA(n)-3'-adenine ribonucleotide + diphosphate. Its function is as follows. Catalyzes the transfer of one adenosine molecule from an ATP to an mRNA poly(A) tail bearing a 3'-OH terminal group and enhances mRNA stability and gene expression. The protein is Terminal nucleotidyltransferase 5C of Gallus gallus (Chicken).